A 474-amino-acid polypeptide reads, in one-letter code: Ribulose bisphosphate carboxylase large chain (474 aa).

N-acetylproline is present on P2. K13 is modified (N6,N6,N6-trimethyllysine). Residues N122 and T172 each contribute to the substrate site. The active-site Proton acceptor is the K174. K176 contributes to the substrate binding site. Mg(2+) contacts are provided by K200, D202, and E203. K200 bears the N6-carboxylysine mark. The active-site Proton acceptor is H293. Substrate is bound by residues R294, H326, and S378.

Belongs to the RuBisCO large chain family. Type I subfamily. As to quaternary structure, heterohexadecamer of 8 large chains and 8 small chains; disulfide-linked. The disulfide link is formed within the large subunit homodimers. The cofactor is Mg(2+). The disulfide bond which can form in the large chain dimeric partners within the hexadecamer appears to be associated with oxidative stress and protein turnover.

The protein localises to the plastid. It is found in the chloroplast. The catalysed reaction is 2 (2R)-3-phosphoglycerate + 2 H(+) = D-ribulose 1,5-bisphosphate + CO2 + H2O. The enzyme catalyses D-ribulose 1,5-bisphosphate + O2 = 2-phosphoglycolate + (2R)-3-phosphoglycerate + 2 H(+). Functionally, ruBisCO catalyzes two reactions: the carboxylation of D-ribulose 1,5-bisphosphate, the primary event in carbon dioxide fixation, as well as the oxidative fragmentation of the pentose substrate in the photorespiration process. Both reactions occur simultaneously and in competition at the same active site. The polypeptide is Ribulose bisphosphate carboxylase large chain (Oltmannsiellopsis viridis (Marine flagellate)).